The sequence spans 304 residues: tRNA dimethylallyltransferase (304 aa).

Residue 10-17 (GPTASGKS) coordinates ATP. 12–17 (TASGKS) is a binding site for substrate. The tract at residues 35–38 (DSRQ) is interaction with substrate tRNA.

The protein belongs to the IPP transferase family. In terms of assembly, monomer. It depends on Mg(2+) as a cofactor.

The enzyme catalyses adenosine(37) in tRNA + dimethylallyl diphosphate = N(6)-dimethylallyladenosine(37) in tRNA + diphosphate. In terms of biological role, catalyzes the transfer of a dimethylallyl group onto the adenine at position 37 in tRNAs that read codons beginning with uridine, leading to the formation of N6-(dimethylallyl)adenosine (i(6)A). The polypeptide is tRNA dimethylallyltransferase (Gloeothece citriformis (strain PCC 7424) (Cyanothece sp. (strain PCC 7424))).